The chain runs to 86 residues: Large ribosomal subunit protein bL27 (86 aa).

A disordered region spans residues 1-24 (MATKKAGGSSRNGRDSAGRRLGVK).

This sequence belongs to the bacterial ribosomal protein bL27 family.

The sequence is that of Large ribosomal subunit protein bL27 from Rickettsia felis (strain ATCC VR-1525 / URRWXCal2) (Rickettsia azadi).